The chain runs to 229 residues: Demethylmenaquinone methyltransferase (229 aa).

S-adenosyl-L-methionine is bound by residues Thr-57, Asp-77, and 101–102 (DV).

The protein belongs to the class I-like SAM-binding methyltransferase superfamily. MenG/UbiE family.

The enzyme catalyses a 2-demethylmenaquinol + S-adenosyl-L-methionine = a menaquinol + S-adenosyl-L-homocysteine + H(+). Its pathway is quinol/quinone metabolism; menaquinone biosynthesis; menaquinol from 1,4-dihydroxy-2-naphthoate: step 2/2. Its function is as follows. Methyltransferase required for the conversion of demethylmenaquinol (DMKH2) to menaquinol (MKH2). The sequence is that of Demethylmenaquinone methyltransferase from Chlamydia trachomatis serovar L2 (strain ATCC VR-902B / DSM 19102 / 434/Bu).